Reading from the N-terminus, the 847-residue chain is Alpha-glucuronidase (847 aa).

The first 19 residues, 1–19 (MVIRSLLLLLLAAIVPVFA), serve as a signal peptide directing secretion. Residues Asn52, Asn238, Asn321, Asn353, Asn586, Asn692, Asn740, and Asn767 are each glycosylated (N-linked (GlcNAc...) asparagine).

Belongs to the glycosyl hydrolase 67 family.

The protein resides in the secreted. The enzyme catalyses an alpha-D-glucuronoside + H2O = D-glucuronate + an alcohol. Releases 4-O-methylglucuronic acid from xylan. This chain is Alpha-glucuronidase, found in Hypocrea jecorina (Trichoderma reesei).